The chain runs to 185 residues: Prorelaxin (185 aa).

A signal peptide spans 1–24 (MPRLFLFHLLGVCLLLNQFSRAVA). Cystine bridges form between cysteine 35/cysteine 172, cysteine 47/cysteine 185, and cysteine 171/cysteine 176. Residues 56–157 (SLNQEDAPLK…LRSLGLDTHS (102 aa)) constitute a propeptide, connecting peptide.

It belongs to the insulin family. In terms of assembly, heterodimer of a B chain and an A chain linked by two disulfide bonds.

It localises to the secreted. Functionally, relaxin is an ovarian hormone that acts with estrogen to produce dilatation of the birth canal in many mammals. May be involved in remodeling of connective tissues during pregnancy, promoting growth of pubic ligaments and ripening of the cervix. This chain is Prorelaxin (RLN), found in Macaca mulatta (Rhesus macaque).